We begin with the raw amino-acid sequence, 184 residues long: Chaperone protein YcdY (184 aa).

It belongs to the TorD/DmsD family. As to quaternary structure, interacts with YcdX.

Functionally, acts as a chaperone that increases YcdX activity, maybe by facilitating the correct insertion of the zinc ions into the catalytic site of YcdX. Involved in the swarming motility process. The polypeptide is Chaperone protein YcdY (ycdY) (Escherichia coli (strain K12)).